Reading from the N-terminus, the 257-residue chain is Dihydroorotate dehydrogenase B (NAD(+)), electron transfer subunit (257 aa).

The FAD-binding FR-type domain occupies 2 to 101 (IRQEKMRVVS…LGPIGNGFPV (100 aa)). Residues 52 to 55 (RPIS), 69 to 71 (IYR), and 76 to 77 (GT) each bind FAD. [2Fe-2S] cluster is bound by residues C220, C225, C228, and C244.

It belongs to the PyrK family. In terms of assembly, heterotetramer of 2 PyrK and 2 PyrD type B subunits. It depends on [2Fe-2S] cluster as a cofactor. Requires FAD as cofactor.

It participates in pyrimidine metabolism; UMP biosynthesis via de novo pathway; orotate from (S)-dihydroorotate (NAD(+) route): step 1/1. Its function is as follows. Responsible for channeling the electrons from the oxidation of dihydroorotate from the FMN redox center in the PyrD type B subunit to the ultimate electron acceptor NAD(+). The sequence is that of Dihydroorotate dehydrogenase B (NAD(+)), electron transfer subunit from Lysinibacillus sphaericus (strain C3-41).